The following is a 214-amino-acid chain: Phosphopantothenoylcysteine decarboxylase HAL3 (214 aa).

Residues 30–32 (GSV) and 55–57 (TRA) each bind FMN. His-92 serves as the catalytic Proton donor. FMN-binding positions include 108–111 (SANT) and Ala-142. 3 residues coordinate N-[(R)-4-phosphopantothenoyl]-L-cysteine: Asn-144, Arg-174, and Ala-176. The active-site Proton donor is Cys-177. Met-185 contributes to the N-[(R)-4-phosphopantothenoyl]-L-cysteine binding site.

It belongs to the HFCD (homooligomeric flavin containing Cys decarboxylase) superfamily. As to quaternary structure, homotrimer. FMN is required as a cofactor. In terms of tissue distribution, mainly expressed in stems, to a lower extent in flowers, leaves and fruits, and at basal levels in roots.

Its subcellular location is the cell membrane. The protein resides in the cytoplasm. The enzyme catalyses N-[(R)-4-phosphopantothenoyl]-L-cysteine + H(+) = (R)-4'-phosphopantetheine + CO2. The protein operates within cofactor biosynthesis; coenzyme A biosynthesis; CoA from (R)-pantothenate: step 3/5. Its function is as follows. Involved in plant growth, and promotes salt and osmotic tolerance, probably via coenzyme A (CoA) accumulation and endogenous proline accumulation. Catalyzes the decarboxylation of 4'-phosphopantothenoylcysteine to 4'-phosphopantetheine, a key step in coenzyme A biosynthesis. Required for roots development. This chain is Phosphopantothenoylcysteine decarboxylase HAL3, found in Malus domestica (Apple).